The primary structure comprises 307 residues: Acyl transferase (307 aa).

Active-site charge relay system residues include serine 116, aspartate 213, and histidine 243.

Belongs to the LuxD family.

It participates in lipid metabolism; fatty acid reduction for biolumincescence. Its function is as follows. Acyl transferase is part of the fatty acid reductase system required for aldehyde biosynthesis; it produces fatty acids for the luminescent reaction. The protein is Acyl transferase of Aliivibrio fischeri (Vibrio fischeri).